The primary structure comprises 174 residues: FAD synthase (174 aa).

ATP-binding positions include Thr34 to Phe35, His39 to His42, Asp119, and Tyr147.

Belongs to the archaeal FAD synthase family. In terms of assembly, homodimer. A divalent metal cation is required as a cofactor.

The enzyme catalyses FMN + ATP + H(+) = FAD + diphosphate. It participates in cofactor biosynthesis; FAD biosynthesis; FAD from FMN: step 1/1. Functionally, catalyzes the transfer of the AMP portion of ATP to flavin mononucleotide (FMN) to produce flavin adenine dinucleotide (FAD) coenzyme. This Methanococcus voltae (strain ATCC BAA-1334 / A3) protein is FAD synthase.